Consider the following 271-residue polypeptide: tRNA (guanine-N(7)-)-methyltransferase (271 aa).

The S-adenosyl-L-methionine site is built by glutamate 95, glutamate 120, aspartate 147, and aspartate 175. Aspartate 175 is a catalytic residue. Residues lysine 179, aspartate 211, and threonine 249–glutamate 252 contribute to the substrate site.

This sequence belongs to the class I-like SAM-binding methyltransferase superfamily. TrmB family.

The catalysed reaction is guanosine(46) in tRNA + S-adenosyl-L-methionine = N(7)-methylguanosine(46) in tRNA + S-adenosyl-L-homocysteine. It functions in the pathway tRNA modification; N(7)-methylguanine-tRNA biosynthesis. Functionally, catalyzes the formation of N(7)-methylguanine at position 46 (m7G46) in tRNA. The protein is tRNA (guanine-N(7)-)-methyltransferase of Rhodopirellula baltica (strain DSM 10527 / NCIMB 13988 / SH1).